A 243-amino-acid polypeptide reads, in one-letter code: Probable transcriptional regulatory protein Smlt3713 (243 aa).

This sequence belongs to the TACO1 family.

Its subcellular location is the cytoplasm. In Stenotrophomonas maltophilia (strain K279a), this protein is Probable transcriptional regulatory protein Smlt3713.